The sequence spans 359 residues: MKENRKIIHIDMDAFYASIEQRDNPKYKGKPLIVGGDPNRRGVVATCSYEARKYGIHSAMPSLTAYKLCPKAIFIRPRMEVYKKVSRQVMNILNEYSNIVEPLSLDEAFVDVSKSKRCKGSATLIALEIKERIFKEVGLTASAGVSFNKFLAKMASDFRKPDGITVITEENSKDFIRKLPIGKFFGVGRVTKNKLNNIGVFKGEDLLGFSEKELIGILGDRGKILYEFARGIDNRQVNPYRIRKSIGKEITLREDIEDIEEMIEILEKISERVSESLCLLNKKGKTVTLKVKFNDFKHITRSITLEHFLKEQKEIMECVKDLISIVDFKNKKVRLLGITISSLEENIITEEREQLSFDV.

Residues 7–188 enclose the UmuC domain; sequence IIHIDMDAFY…LPIGKFFGVG (182 aa). Positions 11 and 106 each coordinate Mg(2+). Residue E107 is part of the active site.

It belongs to the DNA polymerase type-Y family. In terms of assembly, monomer. Requires Mg(2+) as cofactor.

Its subcellular location is the cytoplasm. It catalyses the reaction DNA(n) + a 2'-deoxyribonucleoside 5'-triphosphate = DNA(n+1) + diphosphate. In terms of biological role, poorly processive, error-prone DNA polymerase involved in untargeted mutagenesis. Copies undamaged DNA at stalled replication forks, which arise in vivo from mismatched or misaligned primer ends. These misaligned primers can be extended by PolIV. Exhibits no 3'-5' exonuclease (proofreading) activity. May be involved in translesional synthesis, in conjunction with the beta clamp from PolIII. This is DNA polymerase IV from Clostridium perfringens (strain 13 / Type A).